The chain runs to 169 residues: 6,7-dimethyl-8-ribityllumazine synthase (169 aa).

5-amino-6-(D-ribitylamino)uracil contacts are provided by residues W27, 61 to 63, and 90 to 92; these read SYE and VLI. 95-96 is a (2S)-2-hydroxy-3-oxobutyl phosphate binding site; it reads ST. H98 serves as the catalytic Proton donor. Position 123 (F123) interacts with 5-amino-6-(D-ribitylamino)uracil. R137 serves as a coordination point for (2S)-2-hydroxy-3-oxobutyl phosphate.

It belongs to the DMRL synthase family. As to quaternary structure, homopentamer.

Its subcellular location is the mitochondrion intermembrane space. It carries out the reaction (2S)-2-hydroxy-3-oxobutyl phosphate + 5-amino-6-(D-ribitylamino)uracil = 6,7-dimethyl-8-(1-D-ribityl)lumazine + phosphate + 2 H2O + H(+). It participates in cofactor biosynthesis; riboflavin biosynthesis; riboflavin from 2-hydroxy-3-oxobutyl phosphate and 5-amino-6-(D-ribitylamino)uracil: step 1/2. Catalyzes the formation of 6,7-dimethyl-8-ribityllumazine by condensation of 5-amino-6-(D-ribitylamino)uracil with 3,4-dihydroxy-2-butanone 4-phosphate. This is the penultimate step in the biosynthesis of riboflavin. This is 6,7-dimethyl-8-ribityllumazine synthase (RIB4) from Saccharomyces cerevisiae (strain ATCC 204508 / S288c) (Baker's yeast).